The primary structure comprises 225 residues: UPF0758 protein XOO0495 (225 aa).

An MPN domain is found at 102-224 (ALSDPPSVGR…PVSLAERGWL (123 aa)). Residues His-173, His-175, and Asp-186 each coordinate Zn(2+). The short motif at 173–186 (HNHPSGNPEPSKAD) is the JAMM motif element.

Belongs to the UPF0758 family.

The protein is UPF0758 protein XOO0495 of Xanthomonas oryzae pv. oryzae (strain KACC10331 / KXO85).